Reading from the N-terminus, the 157-residue chain is 6,7-dimethyl-8-ribityllumazine synthase 1 (157 aa).

5-amino-6-(D-ribitylamino)uracil-binding positions include phenylalanine 22, 53 to 55, and 82 to 84; these read ALE and TVI. 87-88 lines the (2S)-2-hydroxy-3-oxobutyl phosphate pocket; it reads ET. Histidine 90 functions as the Proton donor in the catalytic mechanism. Position 115 (asparagine 115) interacts with 5-amino-6-(D-ribitylamino)uracil. Arginine 129 lines the (2S)-2-hydroxy-3-oxobutyl phosphate pocket.

This sequence belongs to the DMRL synthase family.

The enzyme catalyses (2S)-2-hydroxy-3-oxobutyl phosphate + 5-amino-6-(D-ribitylamino)uracil = 6,7-dimethyl-8-(1-D-ribityl)lumazine + phosphate + 2 H2O + H(+). Its pathway is cofactor biosynthesis; riboflavin biosynthesis; riboflavin from 2-hydroxy-3-oxobutyl phosphate and 5-amino-6-(D-ribitylamino)uracil: step 1/2. Catalyzes the formation of 6,7-dimethyl-8-ribityllumazine by condensation of 5-amino-6-(D-ribitylamino)uracil with 3,4-dihydroxy-2-butanone 4-phosphate. This is the penultimate step in the biosynthesis of riboflavin. The chain is 6,7-dimethyl-8-ribityllumazine synthase 1 from Brucella suis biovar 1 (strain 1330).